A 181-amino-acid polypeptide reads, in one-letter code: Inner membrane-spanning protein YciB (181 aa).

The next 5 helical transmembrane spans lie at 3–23 (LLFD…FGIY), 54–74 (SLAI…PWFI), 81–101 (IYWL…KPLI), 119–139 (LNLA…YVAY), and 149–169 (FKLF…AFYL).

Belongs to the YciB family.

Its subcellular location is the cell inner membrane. Functionally, plays a role in cell envelope biogenesis, maintenance of cell envelope integrity and membrane homeostasis. The protein is Inner membrane-spanning protein YciB of Legionella pneumophila (strain Corby).